The following is a 269-amino-acid chain: Tetrahydromethanopterin S-methyltransferase subunit C (269 aa).

8 helical membrane-spanning segments follow: residues 18 to 38 (VLVI…FVPS), 39 to 59 (LAML…ANTT), 62 to 82 (VAAY…LGMG), 84 to 104 (ISAL…ALPF), 106 to 126 (LVLA…FIVG), 152 to 172 (ALAI…DLII), 180 to 200 (IIAL…NACI), and 222 to 242 (LVFS…VFWI).

This sequence belongs to the MtrC family. In terms of assembly, the complex is composed of 8 subunits; MtrA, MtrB, MtrC, MtrD, MtrE, MtrF, MtrG and MtrH.

It localises to the cell membrane. It catalyses the reaction 5-methyl-5,6,7,8-tetrahydromethanopterin + coenzyme M + 2 Na(+)(in) = 5,6,7,8-tetrahydromethanopterin + methyl-coenzyme M + 2 Na(+)(out). It functions in the pathway one-carbon metabolism; methanogenesis from CO(2); methyl-coenzyme M from 5,10-methylene-5,6,7,8-tetrahydromethanopterin: step 2/2. In terms of biological role, part of a complex that catalyzes the formation of methyl-coenzyme M and tetrahydromethanopterin from coenzyme M and methyl-tetrahydromethanopterin. This is an energy-conserving, sodium-ion translocating step. This Methanococcus vannielii (strain ATCC 35089 / DSM 1224 / JCM 13029 / OCM 148 / SB) protein is Tetrahydromethanopterin S-methyltransferase subunit C.